Reading from the N-terminus, the 161-residue chain is tRNA-specific adenosine deaminase (161 aa).

The 119-residue stretch at 2 to 120 (TQDELYMKEA…GTLMNLLQEE (119 aa)) folds into the CMP/dCMP-type deaminase domain. Position 53 (His53) interacts with Zn(2+). Glu55 functions as the Proton donor in the catalytic mechanism. The Zn(2+) site is built by Cys83 and Cys86.

Belongs to the cytidine and deoxycytidylate deaminase family. In terms of assembly, homodimer. It depends on Zn(2+) as a cofactor.

It carries out the reaction adenosine(34) in tRNA + H2O + H(+) = inosine(34) in tRNA + NH4(+). In terms of biological role, catalyzes the deamination of adenosine to inosine at the wobble position 34 of tRNA(Arg2). This chain is tRNA-specific adenosine deaminase, found in Bacillus subtilis (strain 168).